A 488-amino-acid chain; its full sequence is Cytochrome P450 monooxygenase orf2 (488 aa).

Residues 7 to 27 (LPGIFLPLAGCVLALSLTTIV) form a helical membrane-spanning segment. Cys432 is a binding site for heme.

The protein belongs to the cytochrome P450 family. Heme serves as cofactor.

The protein localises to the membrane. It participates in secondary metabolite biosynthesis. Cytochrome P450 monooxygenase; part of the gene cluster that mediates the biosynthesis of nigerpyrone and its derivatives carbonarone A and pestalamide A. The biosynthesis pathway begins with the polyketide assembly by epaA to form phenylacetyl triketide precursor from successive condensation of two malonyl-CoA, presumably with one phenylacetyl-CoA starter unit produced by the phenylacetyl-CoA ligase epaB. For the nigerpyrone biosynthesis, the reactive polyketide chain is released as an aldehyde through the R-domain. A nonenzymatic cyclization and dehydration may create nigerpyrone. For the biosynthesis of carbonarone A and pestalamide A, an extra methyl group is added through the C-methyltransferase domain. Several further steps involving the dehydrogenase orf1, the cytochrome P450 monooxygenase orf2 and the FAD-dependent monooxygenase orf3 are required to form a carbonarone A precursor which is converted to carbonarone A via cyclization. The O-acetyltransferase epaC could catalyze the transfer of 2-methylsuccinyl-CoA, a common intermediate in the ethylmalonyl-CoA pathway, to generate the final product pestalamide A. This chain is Cytochrome P450 monooxygenase orf2, found in Aspergillus niger (strain ATCC MYA-4892 / CBS 513.88 / FGSC A1513).